A 310-amino-acid polypeptide reads, in one-letter code: Nucleotide-binding protein BAD_0837 (310 aa).

31-38 provides a ligand contact to ATP; that stretch reads GMSGAGRS. Residue 82–85 coordinates GTP; sequence DVRS.

The protein belongs to the RapZ-like family.

Functionally, displays ATPase and GTPase activities. The sequence is that of Nucleotide-binding protein BAD_0837 from Bifidobacterium adolescentis (strain ATCC 15703 / DSM 20083 / NCTC 11814 / E194a).